A 31-amino-acid polypeptide reads, in one-letter code: uncharacterized protein (31 aa).

This is an uncharacterized protein from Saccharomyces cerevisiae (strain ATCC 204508 / S288c) (Baker's yeast).